The chain runs to 778 residues: Endonuclease MutS2 (778 aa).

Position 328–335 (328–335 (GPNTGGKT)) interacts with ATP. In terms of domain architecture, Smr spans 702-777 (LDLRGKRYEE…GSGATIVTFK (76 aa)).

This sequence belongs to the DNA mismatch repair MutS family. MutS2 subfamily. As to quaternary structure, homodimer. Binds to stalled ribosomes, contacting rRNA.

In terms of biological role, endonuclease that is involved in the suppression of homologous recombination and thus may have a key role in the control of bacterial genetic diversity. Functionally, acts as a ribosome collision sensor, splitting the ribosome into its 2 subunits. Detects stalled/collided 70S ribosomes which it binds and splits by an ATP-hydrolysis driven conformational change. Acts upstream of the ribosome quality control system (RQC), a ribosome-associated complex that mediates the extraction of incompletely synthesized nascent chains from stalled ribosomes and their subsequent degradation. Probably generates substrates for RQC. This is Endonuclease MutS2 from Streptococcus pneumoniae (strain Hungary19A-6).